The sequence spans 158 residues: Non-secretory ribonuclease (158 aa).

A signal peptide spans 1–27; it reads MVPKLFTSQICLLLLLGLSSLEVSLHA. A C-linked (Man) tryptophan glycan is attached at Trp-34. His-42 functions as the Proton acceptor in the catalytic mechanism. Tyr-60 is modified (3'-nitrotyrosine). 65 to 69 provides a ligand contact to substrate; the sequence is KNRNT. Residues Asn-86, Asn-92, and Asn-111 are each glycosylated (N-linked (GlcNAc...) asparagine). His-153 acts as the Proton donor in catalysis.

This sequence belongs to the pancreatic ribonuclease family. As to quaternary structure, interacts with and forms a tight 1:1 complex with RNH1. Dimerization of two such complexes may occur.

The protein resides in the lysosome. It localises to the cytoplasmic granule. It catalyses the reaction an [RNA] containing cytidine + H2O = an [RNA]-3'-cytidine-3'-phosphate + a 5'-hydroxy-ribonucleotide-3'-[RNA].. It carries out the reaction an [RNA] containing uridine + H2O = an [RNA]-3'-uridine-3'-phosphate + a 5'-hydroxy-ribonucleotide-3'-[RNA].. This is a non-secretory ribonuclease. It is a pyrimidine specific nuclease with a slight preference for U. Cytotoxin and helminthotoxin. Possesses a wide variety of biological activities. This chain is Non-secretory ribonuclease (RNASE2), found in Saguinus labiatus (Red-chested mustached tamarin).